A 736-amino-acid polypeptide reads, in one-letter code: Transcription factor E2F8 (736 aa).

Positions 1–26 (MEEGSKENCGFNGSPMGSRSPPKQLT) are disordered. Positions 15-26 (PMGSRSPPKQLT) are enriched in polar residues. 2 consecutive DNA-binding regions follow at residues 98 to 167 (RKEK…IWHG) and 240 to 326 (RKEK…QWTC). 4 disordered regions span residues 386 to 405 (RRKINSAPSSPIKSGDGSSS), 435 to 456 (SACKAKSTVKQPGGSDKNQTPT), 483 to 551 (EQTL…AVDD), and 716 to 736 (PGGMGCSPPESARKLDVGTDD). Residues 393-405 (PSSPIKSGDGSSS) show a composition bias toward low complexity. Composition is skewed to basic and acidic residues over residues 509 to 539 (GRHEGDGTSHSEDHSAQERHPKRLPESDRGC) and 726 to 736 (SARKLDVGTDD).

Belongs to the E2F/DP family. Homodimer and heterodimer: mainly forms homodimers and, to a lesser extent, heterodimers with e2f7.

Its subcellular location is the nucleus. Atypical E2F transcription factor that participates in various processes such as angiogenesis and polyploidization of specialized cells. Mainly acts as a transcription repressor that binds DNA independently of DP proteins and specifically recognizes the E2 recognition site 5'-TTTC[CG]CGC-3'. Directly represses transcription of classical E2F transcription factors such as e2f1. Acts as a regulator of S-phase by recognizing and binding the E2-related site 5'-TTCCCGCC-3' and mediating repression of G1/S-regulated genes. Acts as a promoter of sprouting angiogenesis, possibly by acting as a transcription activator. This Xenopus tropicalis (Western clawed frog) protein is Transcription factor E2F8 (e2f8).